Consider the following 475-residue polypeptide: Ribulose bisphosphate carboxylase large chain (475 aa).

The residue at position 14 (Lys-14) is an N6,N6,N6-trimethyllysine. Residues Asn-123 and Thr-173 each contribute to the substrate site. Residue Lys-175 is the Proton acceptor of the active site. Lys-177 contributes to the substrate binding site. Mg(2+) is bound by residues Lys-201, Asp-203, and Glu-204. The residue at position 201 (Lys-201) is an N6-carboxylysine. Catalysis depends on His-294, which acts as the Proton acceptor. Arg-295, His-327, and Ser-379 together coordinate substrate.

This sequence belongs to the RuBisCO large chain family. Type I subfamily. In terms of assembly, heterohexadecamer of 8 large chains and 8 small chains; disulfide-linked. The disulfide link is formed within the large subunit homodimers. Mg(2+) serves as cofactor. In terms of processing, the disulfide bond which can form in the large chain dimeric partners within the hexadecamer appears to be associated with oxidative stress and protein turnover.

It is found in the plastid. Its subcellular location is the chloroplast. It carries out the reaction 2 (2R)-3-phosphoglycerate + 2 H(+) = D-ribulose 1,5-bisphosphate + CO2 + H2O. The enzyme catalyses D-ribulose 1,5-bisphosphate + O2 = 2-phosphoglycolate + (2R)-3-phosphoglycerate + 2 H(+). In terms of biological role, ruBisCO catalyzes two reactions: the carboxylation of D-ribulose 1,5-bisphosphate, the primary event in carbon dioxide fixation, as well as the oxidative fragmentation of the pentose substrate in the photorespiration process. Both reactions occur simultaneously and in competition at the same active site. This Actinidia chinensis (Kiwi) protein is Ribulose bisphosphate carboxylase large chain.